The chain runs to 726 residues: Cyclin-T1 (726 aa).

Phosphoserine is present on serine 117. The Nuclear localization signal, and interaction with Tat-TAR RNA motif lies at 253–270 (KRIWNWRACEAAKKTKAD). Serine 340 carries the phosphoserine modification. Residue lysine 342 forms a Glycyl lysine isopeptide (Lys-Gly) (interchain with G-Cter in SUMO2) linkage. Positions 360–385 (VDHSLPQDGSNAFISQKQNSKSVPSA) are disordered. Over residues 366–382 (QDGSNAFISQKQNSKSV) the composition is skewed to polar residues. Residues 384 to 425 (SAKVSLKEYRAKHAEELAAQKRQLENMEANVKSQYAYAAQNL) adopt a coiled-coil conformation. Serine 388 carries the phosphoserine modification. Residue lysine 390 is modified to N6-acetyllysine. Residue lysine 415 forms a Glycyl lysine isopeptide (Lys-Gly) (interchain with G-Cter in SUMO2) linkage. 3 positions are modified to ADP-ribosylserine: serine 416, serine 474, and serine 475. Residues 480–550 (IKMRIKVHAA…RPGDPKHSSQ (71 aa)) form a histidine-rich domain (HRD) region. A Glycyl lysine isopeptide (Lys-Gly) (interchain with G-Cter in SUMO2) cross-link involves residue lysine 481. Lysine 485 is subject to N6-(ADP-ribosyl)lysine. Histidine 487 is modified (ADP-ribosylhistidine). Over residues 487 to 506 (HAAADKHNSVEDSVTKSREH) the composition is skewed to basic and acidic residues. Disordered stretches follow at residues 487–650 (HAAA…NGHN) and 688–726 (SDYL…PLPK). Phosphoserine is present on residues serine 495 and serine 499. A compositionally biased stretch (basic residues) spans 507-530 (KEKHKTHPSNHHHHHNHHSHKHSH). The interval 527 to 570 (KHSHSQLPVGTGNKRPGDPKHSSQTSNLAHKTYSLSSSFSSSSS) is required for interaction with ZMYND8. Histidine 530 is modified (ADP-ribosylhistidine). An ADP-ribosylserine mark is found at serine 531, serine 549, and serine 552. Histidine 556 bears the ADP-ribosylhistidine mark. A compositionally biased stretch (low complexity) spans 560 to 570 (SLSSSFSSSSS). Serine 563 is subject to ADP-ribosylserine. Residues serine 564 and serine 577 each carry the phosphoserine modification. Residues 594-609 (STKSSSLNFSFPSLPT) are compositionally biased toward low complexity. Residues 615–630 (GHSSDTSGLSFSQPSC) are compositionally biased toward polar residues. Position 637 is an ADP-ribosylserine (serine 637). A compositionally biased stretch (pro residues) spans 710 to 726 (PPPLPSEPPPPLPPLPK).

Belongs to the cyclin family. Cyclin C subfamily. As to quaternary structure, cyclin-T1 is the predominant cyclin that associates with CDK9 to form a heterodimer called P-TEFb. P-TEFb forms a complex with AFF4/AF5Q31. Component of a complex which is at least composed of HTATSF1/Tat-SF1, P-TEFb complex, RNA pol II, SUPT5H, and NCL/nucleolin. Component of the 7SK snRNP complex at least composed of P-TEFb (composed of CDK9 and CCNT1/cyclin-T1), HEXIM1, HEXIM2, BCDIN3, SART3 proteins and 7SK and U6 snRNAs. Interacts (via central region) with ZMYND8 (via N-terminus); the interaction is direct and the association appears to occur between homodimeric ZMYND8 and the activated form of the P-TEFb complex. Interacts with BRD4, targets chromatin binding. Interacts with JMJD6. Interacts with MDFIC. Interacts with HSF1. Interacts with HTATSF1. Interacts with TBX21. In terms of assembly, (Microbial infection) Interacts with the transactivation region of HIV-1, HIV-2 and SIV Tat. (Microbial infection) Interacts with human herpes virus 1 (HHV-1) transcriptional regulator ICP22. In terms of processing, ADP-ribosylation on serine residues by PARP1 in response to DNA damage disrupts the phase separation activity of CCNT1, thereby preventing activation of CDK9. Ubiquitously expressed.

Its subcellular location is the nucleus. Functionally, regulatory subunit of the cyclin-dependent kinase pair (CDK9/cyclin-T1) complex, also called positive transcription elongation factor B (P-TEFb), which facilitates the transition from abortive to productive elongation by phosphorylating the CTD (C-terminal domain) of the large subunit of RNA polymerase II (RNA Pol II). Required to activate the protein kinase activity of CDK9: acts by mediating formation of liquid-liquid phase separation (LLPS) that enhances binding of P-TEFb to the CTD of RNA Pol II. (Microbial infection) In case of HIV or SIV infections, binds to the transactivation domain of the viral nuclear transcriptional activator, Tat, thereby increasing Tat's affinity for the transactivating response RNA element (TAR RNA). Serves as an essential cofactor for Tat, by promoting RNA Pol II activation, allowing transcription of viral genes. In Homo sapiens (Human), this protein is Cyclin-T1 (CCNT1).